Here is a 291-residue protein sequence, read N- to C-terminus: ATP synthase gamma chain (291 aa).

The protein belongs to the ATPase gamma chain family. In terms of assembly, F-type ATPases have 2 components, CF(1) - the catalytic core - and CF(0) - the membrane proton channel. CF(1) has five subunits: alpha(3), beta(3), gamma(1), delta(1), epsilon(1). CF(0) has three main subunits: a, b and c.

It is found in the cell inner membrane. Functionally, produces ATP from ADP in the presence of a proton gradient across the membrane. The gamma chain is believed to be important in regulating ATPase activity and the flow of protons through the CF(0) complex. The protein is ATP synthase gamma chain of Burkholderia multivorans (strain ATCC 17616 / 249).